We begin with the raw amino-acid sequence, 121 residues long: Holo-[acyl-carrier-protein] synthase (121 aa).

Positions 8 and 55 each coordinate Mg(2+).

The protein belongs to the P-Pant transferase superfamily. AcpS family. Mg(2+) is required as a cofactor.

The protein resides in the cytoplasm. It catalyses the reaction apo-[ACP] + CoA = holo-[ACP] + adenosine 3',5'-bisphosphate + H(+). Its function is as follows. Transfers the 4'-phosphopantetheine moiety from coenzyme A to a Ser of acyl-carrier-protein. The polypeptide is Holo-[acyl-carrier-protein] synthase (Caldicellulosiruptor bescii (strain ATCC BAA-1888 / DSM 6725 / KCTC 15123 / Z-1320) (Anaerocellum thermophilum)).